Here is a 325-residue protein sequence, read N- to C-terminus: Undecaprenyl-phosphate 4-deoxy-4-formamido-L-arabinose transferase (325 aa).

Helical transmembrane passes span 234 to 254 (LLSV…LLLI) and 269 to 289 (VFML…GMGL).

The protein belongs to the glycosyltransferase 2 family.

The protein localises to the cell inner membrane. The catalysed reaction is UDP-4-deoxy-4-formamido-beta-L-arabinose + di-trans,octa-cis-undecaprenyl phosphate = 4-deoxy-4-formamido-alpha-L-arabinopyranosyl di-trans,octa-cis-undecaprenyl phosphate + UDP. It participates in glycolipid biosynthesis; 4-amino-4-deoxy-alpha-L-arabinose undecaprenyl phosphate biosynthesis; 4-amino-4-deoxy-alpha-L-arabinose undecaprenyl phosphate from UDP-4-deoxy-4-formamido-beta-L-arabinose and undecaprenyl phosphate: step 1/2. Its pathway is bacterial outer membrane biogenesis; lipopolysaccharide biosynthesis. Its function is as follows. Catalyzes the transfer of 4-deoxy-4-formamido-L-arabinose from UDP to undecaprenyl phosphate. The modified arabinose is attached to lipid A and is required for resistance to polymyxin and cationic antimicrobial peptides. The sequence is that of Undecaprenyl-phosphate 4-deoxy-4-formamido-L-arabinose transferase from Erwinia tasmaniensis (strain DSM 17950 / CFBP 7177 / CIP 109463 / NCPPB 4357 / Et1/99).